We begin with the raw amino-acid sequence, 1396 residues long: DNA-directed RNA polymerase subunit beta' (1396 aa).

Positions 70, 72, 85, and 88 each coordinate Zn(2+). 3 residues coordinate Mg(2+): D460, D462, and D464. The Zn(2+) site is built by C814, C888, C895, and C898.

The protein belongs to the RNA polymerase beta' chain family. As to quaternary structure, the RNAP catalytic core consists of 2 alpha, 1 beta, 1 beta' and 1 omega subunit. When a sigma factor is associated with the core the holoenzyme is formed, which can initiate transcription. The cofactor is Mg(2+). Requires Zn(2+) as cofactor.

The catalysed reaction is RNA(n) + a ribonucleoside 5'-triphosphate = RNA(n+1) + diphosphate. Functionally, DNA-dependent RNA polymerase catalyzes the transcription of DNA into RNA using the four ribonucleoside triphosphates as substrates. In Chromobacterium violaceum (strain ATCC 12472 / DSM 30191 / JCM 1249 / CCUG 213 / NBRC 12614 / NCIMB 9131 / NCTC 9757 / MK), this protein is DNA-directed RNA polymerase subunit beta'.